A 1116-amino-acid polypeptide reads, in one-letter code: Cation channel sperm-associated auxiliary subunit beta (1116 aa).

Over 1–1053 (MESPLIYVSV…QIYVDEAPLP (1053 aa)) the chain is Extracellular. Cysteines 35 and 60 form a disulfide. N-linked (GlcNAc...) asparagine glycans are attached at residues Asn90, Asn100, Asn118, Asn226, and Asn321. An intrachain disulfide couples Cys189 to Cys302. An intrachain disulfide couples Cys330 to Cys343. Residues Asn618 and Asn690 are each glycosylated (N-linked (GlcNAc...) asparagine). 4 disulfide bridges follow: Cys718-Cys816, Cys829-Cys1037, Cys911-Cys920, and Cys922-Cys937. 2 N-linked (GlcNAc...) asparagine glycosylation sites follow: Asn913 and Asn921. Asn1010 and Asn1015 each carry an N-linked (GlcNAc...) asparagine glycan. Residues 1054–1076 (FPGHTLIAVATAVVLGGLIFIAF) form a helical membrane-spanning segment. Residues 1077 to 1116 (MFQLQGIHPWRTFQRWIRRNQEKFSSISLSELIHRSKSEE) are Cytoplasmic-facing.

As to quaternary structure, component of the CatSper complex or CatSpermasome composed of the core pore-forming members CATSPER1, CATSPER2, CATSPER3 and CATSPER4 as well as auxiliary members CATSPERB, CATSPERG, CATSPERD, CATSPERE, CATSPERZ, C2CD6/CATSPERT, TMEM249, TMEM262 and EFCAB9. HSPA1 may be an additional auxiliary complex member. The core complex members CATSPER1, CATSPER2, CATSPER3 and CATSPER4 form a heterotetrameric channel. The auxiliary CATSPERB, CATSPERG, CATSPERD and CATSPERE subunits form a pavilion-like structure over the pore which stabilizes the complex through interactions with CATSPER4, CATSPER3, CATSPER1 and CATSPER2 respectively. TMEM262/CATSPERH interacts with CATSPERB, further stabilizing the complex. C2CD6/CATSPERT interacts at least with CATSPERD and is required for targeting the CatSper complex in the flagellar membrane.

It localises to the cell projection. The protein resides in the cilium. Its subcellular location is the flagellum membrane. Its function is as follows. Auxiliary component of the CatSper complex, a complex involved in sperm cell hyperactivation. Sperm cell hyperactivation is needed for sperm motility which is essential late in the preparation of sperm for fertilization. This Homo sapiens (Human) protein is Cation channel sperm-associated auxiliary subunit beta.